A 140-amino-acid polypeptide reads, in one-letter code: MRKYRVAGLVAALLVLHSLATPSAQAEAHRAGGEGEEKMSSDGGPVLGGVEPVGNENDLHLVDLARFAVTEHNKKANSLLEFEKLVSVKQQVVAGTLYYFTIEVKEGDAKKLYEAKVWEKPWMDFKELQEFKPVDASANA.

Residues 1-26 (MRKYRVAGLVAALLVLHSLATPSAQA) form the signal peptide. In terms of domain architecture, Cystatin spans 48-135 (GGVEPVGNEN…KELQEFKPVD (88 aa)). Positions 91-95 (QVVAG) match the Secondary area of contact motif.

This sequence belongs to the cystatin family. Phytocystatin subfamily.

It localises to the secreted. Its function is as follows. There are two distinct cystatins in rice seeds (Oryzacystatin-1 and -2) with different specificities against cysteine proteinases. May be involved in the control of germination by inhibition of endogenous cysteine proteinases. May play a role in defense by inhibiting exogenous proteases such as those present in digestive tracks of insects and nematodes. The chain is Cysteine proteinase inhibitor 1 from Oryza sativa subsp. japonica (Rice).